The primary structure comprises 391 residues: Shewanella-like protein phosphatase 2 (391 aa).

Asp61, His63, Asp97, and Asn132 together coordinate Mn(2+). Residue His133 is the Proton donor of the active site. Mn(2+) contacts are provided by His232 and His295.

The protein belongs to the metallophosphoesterase superfamily. SLP family. Requires Mn(2+) as cofactor. Expressed in roots and siliques (at protein level).

The protein localises to the cytoplasm. Its subcellular location is the cytosol. Shows phosphatase activity, hydrolyzing the artificial substrate para-nitrophenylphosphate (pNPP) in vitro. The sequence is that of Shewanella-like protein phosphatase 2 from Arabidopsis thaliana (Mouse-ear cress).